The chain runs to 367 residues: DNA-directed RNA polymerase II subunit GRINL1A (367 aa).

A coiled-coil region spans residues 15-40 (DLERRSLAELREMLKRQERLLRNEKF). Residues 29–68 (KRQERLLRNEKFICKLPDKGKKIFDSFAKLKAAIAECEEV) are important for transcription repressor activity. Polar residues-rich tracts occupy residues 117-131 (SVDN…QNQG), 176-185 (RVSSQAEDTS), and 205-225 (GEQQ…SGTQ). Disordered stretches follow at residues 117–185 (SVDN…EDTS), 203–225 (DQGE…SGTQ), and 254–281 (PFRQ…RRDK). The interaction with Pol II stretch occupies residues 226 to 297 (KKPHYMEVLE…TAARLLPLHH (72 aa)). S269 is modified (phosphoserine). Residues 298–313 (MPTQLLSIEESLALQK) are important for transcription repressor activity. The stretch at 300-329 (TQLLSIEESLALQKQRKQKYEEMQAKLAAQ) forms a coiled coil. The interval 314–339 (QRKQKYEEMQAKLAAQKLAERLNIKM) is interaction with Pol II. The interval 335 to 367 (LNIKMRSYNPEGESSGRYREVRDEDDDWSSDEF) is disordered. Residues 357 to 367 (DEDDDWSSDEF) show a composition bias toward acidic residues.

Belongs to the GRINL1 family. As to quaternary structure, component of the Pol II(G) complex, which contains the RNA polymerase II (Pol II) core complex subunits and POLR2M isoform 1. Pol II(G) appears to be an abundant form of Pol II. Post-translationally, dephosphorylated at Ser-269 by the PNUTS-PP1 complex, promoting RNA polymerase II transcription pause-release.

It localises to the nucleus. In terms of biological role, appears to be a stable component of the Pol II(G) complex form of RNA polymerase II (Pol II). Pol II synthesizes mRNA precursors and many functional non-coding RNAs and is the central component of the basal RNA polymerase II transcription machinery. May play a role in the Mediator complex-dependent regulation of transcription activation. Acts as a negative regulator of transcriptional activation; this repression is relieved by the Mediator complex, which restores Pol II(G) activator-dependent transcription to a level equivalent to that of Pol II. The polypeptide is DNA-directed RNA polymerase II subunit GRINL1A (POLR2M) (Pongo abelii (Sumatran orangutan)).